A 231-amino-acid polypeptide reads, in one-letter code: 5'-methylthioadenosine/S-adenosylhomocysteine nucleosidase (231 aa).

Glu-12 (proton acceptor) is an active-site residue. Residues Gly-78, Met-153, and 174 to 175 (ME) each bind substrate. Residue Asp-198 is the Proton donor of the active site.

The protein belongs to the PNP/UDP phosphorylase family. MtnN subfamily.

It catalyses the reaction S-adenosyl-L-homocysteine + H2O = S-(5-deoxy-D-ribos-5-yl)-L-homocysteine + adenine. The enzyme catalyses S-methyl-5'-thioadenosine + H2O = 5-(methylsulfanyl)-D-ribose + adenine. The catalysed reaction is 5'-deoxyadenosine + H2O = 5-deoxy-D-ribose + adenine. Its pathway is amino-acid biosynthesis; L-methionine biosynthesis via salvage pathway; S-methyl-5-thio-alpha-D-ribose 1-phosphate from S-methyl-5'-thioadenosine (hydrolase route): step 1/2. Catalyzes the irreversible cleavage of the glycosidic bond in both 5'-methylthioadenosine (MTA) and S-adenosylhomocysteine (SAH/AdoHcy) to adenine and the corresponding thioribose, 5'-methylthioribose and S-ribosylhomocysteine, respectively. Also cleaves 5'-deoxyadenosine, a toxic by-product of radical S-adenosylmethionine (SAM) enzymes, into 5-deoxyribose and adenine. The polypeptide is 5'-methylthioadenosine/S-adenosylhomocysteine nucleosidase (Bacillus licheniformis (strain ATCC 14580 / DSM 13 / JCM 2505 / CCUG 7422 / NBRC 12200 / NCIMB 9375 / NCTC 10341 / NRRL NRS-1264 / Gibson 46)).